The primary structure comprises 885 residues: DNA mismatch repair protein MutS (885 aa).

ATP is bound at residue 640–647 (GPNMGGKS).

Belongs to the DNA mismatch repair MutS family.

Its function is as follows. This protein is involved in the repair of mismatches in DNA. It is possible that it carries out the mismatch recognition step. This protein has a weak ATPase activity. This chain is DNA mismatch repair protein MutS, found in Variovorax paradoxus (strain S110).